The primary structure comprises 485 residues: MLSASRKLNNQQFLKTIRNMTTFRSEFDTFGEVKVNDEKYWGAQTQRSLENFDIGGESEKMPLMVVRSFGILKRCAAIVNKKYGLDATIADNIAKAATEVVEGKLDDQFPLVVFQTGSGTQSNMNANEVISNRAIELMTGKRDFSKKLVHPNDHVNKSQSSNDTFPTCMHIAAAISINEKLVPALEMLLAAMRTKQNEFNHIIKIGRTHLQDATPLTLGQEFSGYCTQIEYGIQRIKDTLPRLYNLAQGGTAVGTGLNTPVGFDVDIASEVAKFTGLPFKTAPNKFEALAAHDAMVEVSGALNTVAVSLMKIANDIRFLGSGPRCGLGELILPENEPGSSIMPGKVNPTQCEAMTMVCAQVMGNNTTVSIAGSNGHFELNVFKPVIIKNVLSSIRLIADASVSFTKHCVVGIKADEKRIDQLLHESLMLVTALNPYIGYDKAAKAAKKAHKEKTTLKEACLSLGFTTSEEFDKWVDPSKMIGSMK.

Residues 1-19 (MLSASRKLNNQQFLKTIRN) constitute a mitochondrion transit peptide. Residues 118–120 (SGT), 150–153 (HPND), 160–162 (SSN), and Thr-208 contribute to the substrate site. His-209 (proton donor/acceptor) is an active-site residue. Ser-339 is an active-site residue. Residues Ser-340 and 345–347 (KVN) each bind substrate.

It belongs to the class-II fumarase/aspartase family. Fumarase subfamily. As to quaternary structure, homotetramer.

It is found in the mitochondrion. The protein resides in the cytoplasm. The enzyme catalyses (S)-malate = fumarate + H2O. Its pathway is carbohydrate metabolism; tricarboxylic acid cycle; (S)-malate from fumarate: step 1/1. Catalyzes the reversible stereospecific interconversion of fumarate to L-malate. In terms of biological role, catalyzes the hydration of fumarate to L-malate in the tricarboxylic acid (TCA) cycle to facilitate a transition step in the production of energy in the form of NADH. The polypeptide is Fumarate hydratase, mitochondrial (Dictyostelium discoideum (Social amoeba)).